Here is a 79-residue protein sequence, read N- to C-terminus: Acyl carrier protein (79 aa).

Residues 2–77 form the Carrier domain; that stretch reads STIEERVKKI…QAIDYVKVHV (76 aa). Position 37 is an O-(pantetheine 4'-phosphoryl)serine (Ser-37).

The protein belongs to the acyl carrier protein (ACP) family. In terms of processing, 4'-phosphopantetheine is transferred from CoA to a specific serine of apo-ACP by AcpS. This modification is essential for activity because fatty acids are bound in thioester linkage to the sulfhydryl of the prosthetic group.

It localises to the cytoplasm. The protein operates within lipid metabolism; fatty acid biosynthesis. Carrier of the growing fatty acid chain in fatty acid biosynthesis. In Xanthomonas albilineans, this protein is Acyl carrier protein.